The primary structure comprises 515 residues: Bifunctional purine biosynthesis protein PurH (515 aa).

The MGS-like domain occupies 1–145 (MTKRALISVS…KNHASVTVVV (145 aa)).

This sequence belongs to the PurH family.

It catalyses the reaction (6R)-10-formyltetrahydrofolate + 5-amino-1-(5-phospho-beta-D-ribosyl)imidazole-4-carboxamide = 5-formamido-1-(5-phospho-D-ribosyl)imidazole-4-carboxamide + (6S)-5,6,7,8-tetrahydrofolate. It carries out the reaction IMP + H2O = 5-formamido-1-(5-phospho-D-ribosyl)imidazole-4-carboxamide. Its pathway is purine metabolism; IMP biosynthesis via de novo pathway; 5-formamido-1-(5-phospho-D-ribosyl)imidazole-4-carboxamide from 5-amino-1-(5-phospho-D-ribosyl)imidazole-4-carboxamide (10-formyl THF route): step 1/1. The protein operates within purine metabolism; IMP biosynthesis via de novo pathway; IMP from 5-formamido-1-(5-phospho-D-ribosyl)imidazole-4-carboxamide: step 1/1. The sequence is that of Bifunctional purine biosynthesis protein PurH from Streptococcus pyogenes serotype M3 (strain ATCC BAA-595 / MGAS315).